The chain runs to 367 residues: Putative threonine-phosphate decarboxylase (367 aa).

Residues 12–13 (HG), N29, and N152 each bind O-phospho-L-threonine. An N6-(pyridoxal phosphate)lysine modification is found at K213. The O-phospho-L-threonine site is built by R320 and R334.

This sequence belongs to the class-II pyridoxal-phosphate-dependent aminotransferase family. It depends on pyridoxal 5'-phosphate as a cofactor.

The enzyme catalyses O-phospho-L-threonine + H(+) = (R)-1-aminopropan-2-yl phosphate + CO2. It participates in cofactor biosynthesis; adenosylcobalamin biosynthesis. Decarboxylates L-threonine-O-3-phosphate to yield (R)-1-amino-2-propanol O-2-phosphate, the precursor for the linkage between the nucleotide loop and the corrin ring in cobalamin. This Caldanaerobacter subterraneus subsp. tengcongensis (strain DSM 15242 / JCM 11007 / NBRC 100824 / MB4) (Thermoanaerobacter tengcongensis) protein is Putative threonine-phosphate decarboxylase (cobD).